Here is a 237-residue protein sequence, read N- to C-terminus: MNVKKAVVVFSGGQDSTTCLVQALAHYDEVHAITFDYGQRHREEIETARRLATQFGIAAHKVMDVTLLNELAVSALTRDEIPVSGELQDNGLPNTFVPGRNILFLTLASIYAYQVGAEAVITGVCETDFSGYPDCRDEFVKSLNQAVSLGLDRCIRFETPLMWLDKAETWALADYYGHLETVRQQTLTCYNGIAGDGCGTCPACELRSRGLDLYLADKAGIMARLYEKTGLCEKSVL.

An ATP-binding site is contributed by 10–20; sequence FSGGQDSTTCL. C189, C198, C201, and C204 together coordinate Zn(2+).

It belongs to the QueC family. Requires Zn(2+) as cofactor.

It catalyses the reaction 7-carboxy-7-deazaguanine + NH4(+) + ATP = 7-cyano-7-deazaguanine + ADP + phosphate + H2O + H(+). The protein operates within purine metabolism; 7-cyano-7-deazaguanine biosynthesis. Catalyzes the ATP-dependent conversion of 7-carboxy-7-deazaguanine (CDG) to 7-cyano-7-deazaguanine (preQ(0)). This chain is 7-cyano-7-deazaguanine synthase, found in Aeromonas salmonicida (strain A449).